The chain runs to 455 residues: UDP-N-acetylmuramoylalanine--D-glutamate ligase (455 aa).

118-124 (GSNAKST) lines the ATP pocket.

Belongs to the MurCDEF family.

It localises to the cytoplasm. It catalyses the reaction UDP-N-acetyl-alpha-D-muramoyl-L-alanine + D-glutamate + ATP = UDP-N-acetyl-alpha-D-muramoyl-L-alanyl-D-glutamate + ADP + phosphate + H(+). Its pathway is cell wall biogenesis; peptidoglycan biosynthesis. Cell wall formation. Catalyzes the addition of glutamate to the nucleotide precursor UDP-N-acetylmuramoyl-L-alanine (UMA). The protein is UDP-N-acetylmuramoylalanine--D-glutamate ligase of Chromohalobacter salexigens (strain ATCC BAA-138 / DSM 3043 / CIP 106854 / NCIMB 13768 / 1H11).